The primary structure comprises 2311 residues: Proto-oncogene tyrosine-protein kinase ROS (2311 aa).

Residues 1–24 form the signal peptide; sequence MRNACLLLNRLGAFYFIWISAAYC. The Extracellular segment spans residues 25–1873; it reads SFSKNCQDLC…LAKDTVTSPD (1849 aa). N-linked (GlcNAc...) asparagine glycosylation is found at Asn49, Asn65, Asn77, Asn123, Asn132, Asn265, Asn287, Asn307, Asn333, Asn377, Asn405, Asn480, Asn607, Asn628, Asn706, Asn714, Asn911, Asn940, Asn962, Asn971, Asn1110, Asn1154, Asn1180, Asn1233, Asn1255, Asn1282, Asn1316, Asn1470, Asn1509, Asn1588, Asn1628, Asn1682, Asn1696, and Asn1730. Fibronectin type-III domains lie at 110–202 and 203–294; these read KPGA…ASGV and PTTA…PESK. One can recognise a Fibronectin type-III 3 domain in the interval 571-671; the sequence is LPTLPRLVTV…EPFRGMTFEE (101 aa). Fibronectin type-III domains follow at residues 952–1047 and 1051–1158; these read VPES…APEG and APAN…SSDI. Fibronectin type-III domains are found at residues 1459-1569, 1570-1669, 1671-1766, and 1767-1868; these read DTEK…TLYG, VPEG…AKTF, TPLS…TTAG, and VPSK…AKDT. Low complexity predominate over residues 1754–1764; sequence STSSPTSFKTT. The disordered stretch occupies residues 1754–1786; that stretch reads STSSPTSFKTTAGVPSKPGTPKRAEDSKNSVQW. Positions 1775-1786 are enriched in basic and acidic residues; it reads KRAEDSKNSVQW. Asn1792, Asn1795, and Asn1822 each carry an N-linked (GlcNAc...) asparagine glycan. The helical transmembrane segment at 1874–1898 threads the bilayer; the sequence is ITAIVAVIGAVVLGLTIIILFGFVW. Residues 1899–2311 are Cytoplasmic-facing; that stretch reads HQRWKSRKPA…SISSAELTSV (413 aa). The region spanning 1961–2240 is the Protein kinase domain; that stretch reads LNLHKLLGSG…KLQEIRHSPL (280 aa). Residues 1967-1975 and Lys1996 each bind ATP; that span reads LGSGAFGEV. Asp2095 acts as the Proton acceptor in catalysis. The residue at position 2131 (Tyr2131) is a Phosphotyrosine; by autocatalysis.

Belongs to the protein kinase superfamily. Tyr protein kinase family. Insulin receptor subfamily. Interacts with VAV3; constitutive interaction mediating VAV3 phosphorylation. Highest expression in kidney. Also expressed in gonad, thymus, bursa, brain and kidney.

The protein localises to the cell membrane. The enzyme catalyses L-tyrosyl-[protein] + ATP = O-phospho-L-tyrosyl-[protein] + ADP + H(+). Functionally, orphan receptor tyrosine kinase (RTK) that may activate several downstream signaling pathways related to cell differentiation, proliferation, growth and survival including the PI3 kinase-mTOR signaling pathway. Mediates the phosphorylation of PTPN11, an activator of this pathway. May also phosphorylate and activate the transcription factor STAT3 to control anchorage-independent cell growth. Mediates the phosphorylation and the activation of VAV3, a guanine nucleotide exchange factor regulating cell morphology. May activate other downstream signaling proteins including AKT1, MAPK1, MAPK3, IRS1, and PLCG2. In Gallus gallus (Chicken), this protein is Proto-oncogene tyrosine-protein kinase ROS (ROS1).